A 424-amino-acid polypeptide reads, in one-letter code: UDP-N-acetylglucosamine 1-carboxyvinyltransferase (424 aa).

22 to 23 (KN) is a phosphoenolpyruvate binding site. Residue arginine 93 coordinates UDP-N-acetyl-alpha-D-glucosamine. Cysteine 117 (proton donor) is an active-site residue. Position 117 is a 2-(S-cysteinyl)pyruvic acid O-phosphothioketal (cysteine 117). UDP-N-acetyl-alpha-D-glucosamine-binding positions include 122–126 (RPIDL), aspartate 307, and isoleucine 329.

It belongs to the EPSP synthase family. MurA subfamily.

Its subcellular location is the cytoplasm. The enzyme catalyses phosphoenolpyruvate + UDP-N-acetyl-alpha-D-glucosamine = UDP-N-acetyl-3-O-(1-carboxyvinyl)-alpha-D-glucosamine + phosphate. It functions in the pathway cell wall biogenesis; peptidoglycan biosynthesis. Its function is as follows. Cell wall formation. Adds enolpyruvyl to UDP-N-acetylglucosamine. This chain is UDP-N-acetylglucosamine 1-carboxyvinyltransferase, found in Chlorobium phaeovibrioides (strain DSM 265 / 1930) (Prosthecochloris vibrioformis (strain DSM 265)).